Consider the following 1235-residue polypeptide: Chitin synthase 4 (1235 aa).

The span at 1–11 shows a compositional bias: pro residues; sequence MSLPRRPGPSP. The disordered stretch occupies residues 1 to 203; it reads MSLPRRPGPS…ASKGKREKSG (203 aa). Topologically, residues 1–212 are cytoplasmic; the sequence is MSLPRRPGPS…GGLPTPSFWN (212 aa). Positions 19-28 are enriched in basic residues; sequence YRQSGSRRSR. Residues 46 to 59 show a composition bias toward polar residues; sequence PSQQQRVPSISSFP. Residues 94–107 show a composition bias toward basic and acidic residues; the sequence is IRPERNRIGKDHPN. Positions 116–125 are enriched in polar residues; sequence NMNTLPSSTG. Residues 169–187 show a composition bias toward basic and acidic residues; sequence ETEKSGDERRRRRKSDTTK. The span at 188–199 shows a compositional bias: basic residues; that stretch reads HGKIVKASKGKR. A helical transmembrane segment spans residues 213-233; sequence IYCGFVTFWCPGFVLKCFGMP. The Extracellular segment spans residues 234–244; sequence EMAQQRAWREK. The helical transmembrane segment at 245-265 threads the bilayer; sequence MGLISIILLIMGFVGFITFGF. Topologically, residues 266–514 are cytoplasmic; sequence TQVVCGKPPL…ASKVVLYVSL (249 aa). The chain crosses the membrane as a helical span at residues 515–535; sequence VLILAVVLARFVLALIFQWFI. The Extracellular segment spans residues 536-1065; that stretch reads SKTYAAAKTS…SMQFIVGIEL (530 aa). The interval 545–592 is disordered; the sequence is SQTSDQRKRNRQIEDWTEDIYRAPPRLPGEVGSSVAGSSDRQSKRSSA. Residues 549–558 show a composition bias toward basic and acidic residues; that stretch reads DQRKRNRQIE. An N-linked (GlcNAc...) asparagine glycan is attached at asparagine 639. A disordered region spans residues 645 to 670; sequence FLKSDAYGSSSSPADGPGPAGFIHEA. Positions 648-665 are enriched in low complexity; that stretch reads SDAYGSSSSPADGPGPAG. N-linked (GlcNAc...) asparagine glycosylation is present at asparagine 1034. Residues 1066–1086 form a helical membrane-spanning segment; the sequence is IGTLVLPAAIAFTFYVVIISI. Residues 1087-1092 are Cytoplasmic-facing; sequence INSPPQ. The chain crosses the membrane as a helical span at residues 1093–1113; that stretch reads IIPLVLLGLILGLPAILVVVT. At 1114–1116 the chain is on the extracellular side; the sequence is AHS. The helical transmembrane segment at 1117–1137 threads the bilayer; that stretch reads WSYIIWMFIYLLSLPVWNFVL. Topologically, residues 1138 to 1235 are cytoplasmic; that stretch reads PTYAFWKFDD…RHFDDYFSDA (98 aa). A disordered region spans residues 1201-1235; sequence RDNVISGVGGSNGWGSSQPRGHEQGRHFDDYFSDA. A compositionally biased stretch (basic and acidic residues) spans 1220–1235; sequence RGHEQGRHFDDYFSDA.

Belongs to the chitin synthase family. Class IV subfamily.

The protein localises to the cell membrane. It catalyses the reaction [(1-&gt;4)-N-acetyl-beta-D-glucosaminyl](n) + UDP-N-acetyl-alpha-D-glucosamine = [(1-&gt;4)-N-acetyl-beta-D-glucosaminyl](n+1) + UDP + H(+). Functionally, polymerizes chitin, a structural polymer of the cell wall and septum, by transferring the sugar moiety of UDP-GlcNAc to the non-reducing end of the growing chitin polymer. The sequence is that of Chitin synthase 4 (chs-4) from Neurospora crassa (strain ATCC 24698 / 74-OR23-1A / CBS 708.71 / DSM 1257 / FGSC 987).